Consider the following 116-residue polypeptide: MNLITTIITITITLSAVLATISFWLPQISPDAEKLSPYECGFDPLGSARLPFSLRFFLIAILFLLFDLEIALLLPLPWGDQLNTPALTLVWSTAVLALLTLGLIYEWTQGGLEWAE.

3 consecutive transmembrane segments (helical) span residues 3-23, 56-76, and 85-105; these read LITT…TISF, FFLI…LLPL, and PALT…GLIY.

The protein belongs to the complex I subunit 3 family.

It localises to the mitochondrion membrane. It carries out the reaction a ubiquinone + NADH + 5 H(+)(in) = a ubiquinol + NAD(+) + 4 H(+)(out). Functionally, core subunit of the mitochondrial membrane respiratory chain NADH dehydrogenase (Complex I) that is believed to belong to the minimal assembly required for catalysis. Complex I functions in the transfer of electrons from NADH to the respiratory chain. The immediate electron acceptor for the enzyme is believed to be ubiquinone. The chain is NADH-ubiquinone oxidoreductase chain 3 (MT-ND3) from Oncorhynchus masou (Cherry salmon).